A 142-amino-acid chain; its full sequence is Small ribosomal subunit protein bS6 (142 aa).

Residues Asn-110 to Glu-142 form a disordered region.

This sequence belongs to the bacterial ribosomal protein bS6 family.

Binds together with bS18 to 16S ribosomal RNA. This chain is Small ribosomal subunit protein bS6, found in Helicobacter acinonychis (strain Sheeba).